A 204-amino-acid polypeptide reads, in one-letter code: Nucleoside triphosphate pyrophosphatase (204 aa).

D78 (proton acceptor) is an active-site residue.

It belongs to the Maf family. It depends on a divalent metal cation as a cofactor.

It localises to the cytoplasm. The catalysed reaction is a ribonucleoside 5'-triphosphate + H2O = a ribonucleoside 5'-phosphate + diphosphate + H(+). The enzyme catalyses a 2'-deoxyribonucleoside 5'-triphosphate + H2O = a 2'-deoxyribonucleoside 5'-phosphate + diphosphate + H(+). In terms of biological role, nucleoside triphosphate pyrophosphatase. May have a dual role in cell division arrest and in preventing the incorporation of modified nucleotides into cellular nucleic acids. The sequence is that of Nucleoside triphosphate pyrophosphatase from Prochlorococcus marinus (strain MIT 9215).